Reading from the N-terminus, the 282-residue chain is MLRKPAVAGMFYPDDSEELVKTIEDCFLHSFGPGKIPDIESFEGNDYPVNVMVPHAGFQYSGTIAAHSYCELAKNGFPEVFIIIGPNHTGLGSEVSVFNKGEWITPLGNIQVDEEFADTLISFSDFASADFAAHMREHSIEVQLPFLQYFSNDFKIVPVVLGSQTISAANDLAAAILKAGEKLDKSYCVIASSDLSHFNTQERANKVDGFVLEDIENMDEFKLLEEIIQYNITMCGYGPVMTTMILSKMCGKNTSEILAYKTSGDISGDLSSVVGYASGIFK.

The protein belongs to the MEMO1 family.

The chain is MEMO1 family protein Msm_1438 from Methanobrevibacter smithii (strain ATCC 35061 / DSM 861 / OCM 144 / PS).